A 599-amino-acid polypeptide reads, in one-letter code: Fructan 1-exohydrolase (599 aa).

The signal sequence occupies residues 1 to 16; sequence MAQAWAFLLLPALALA. D78 is an active-site residue. N-linked (GlcNAc...) asparagine glycans are attached at residues N171, N239, and N251. C449 and C495 are disulfide-bonded.

Belongs to the glycosyl hydrolase 32 family.

The enzyme catalyses Hydrolysis of terminal, non-reducing (2-&gt;1)-linked beta-D-fructofuranose residues in fructans.. Its activity is regulated as follows. Inhibited by sucrose. In terms of biological role, hydrolyzes inulin-type beta-(2,1)-fructans. May play a role as a beta-(2,1)-trimmer during graminan biosynthesis. The sequence is that of Fructan 1-exohydrolase from Hordeum vulgare (Barley).